Here is a 617-residue protein sequence, read N- to C-terminus: Proline--tRNA ligase (617 aa).

It belongs to the class-II aminoacyl-tRNA synthetase family. ProS type 1 subfamily. In terms of assembly, homodimer.

The protein localises to the cytoplasm. It carries out the reaction tRNA(Pro) + L-proline + ATP = L-prolyl-tRNA(Pro) + AMP + diphosphate. In terms of biological role, catalyzes the attachment of proline to tRNA(Pro) in a two-step reaction: proline is first activated by ATP to form Pro-AMP and then transferred to the acceptor end of tRNA(Pro). As ProRS can inadvertently accommodate and process non-cognate amino acids such as alanine and cysteine, to avoid such errors it has two additional distinct editing activities against alanine. One activity is designated as 'pretransfer' editing and involves the tRNA(Pro)-independent hydrolysis of activated Ala-AMP. The other activity is designated 'posttransfer' editing and involves deacylation of mischarged Ala-tRNA(Pro). The misacylated Cys-tRNA(Pro) is not edited by ProRS. The sequence is that of Proline--tRNA ligase from Streptococcus pneumoniae serotype 4 (strain ATCC BAA-334 / TIGR4).